Consider the following 252-residue polypeptide: Uridylate kinase (252 aa).

Position 27-30 (27-30) interacts with ATP; sequence KLGG. Gly68 provides a ligand contact to UMP. 2 residues coordinate ATP: Gly69 and Arg73. UMP contacts are provided by residues Asp88 and 149–156; that span reads MGLPYFST. Residues Tyr182 and Asp185 each contribute to the ATP site.

It belongs to the UMP kinase family. As to quaternary structure, homohexamer.

Its subcellular location is the cytoplasm. It carries out the reaction UMP + ATP = UDP + ADP. It participates in pyrimidine metabolism; CTP biosynthesis via de novo pathway; UDP from UMP (UMPK route): step 1/1. With respect to regulation, inhibited by UTP. Its function is as follows. Catalyzes the reversible phosphorylation of UMP to UDP. This chain is Uridylate kinase, found in Mycobacterium sp. (strain JLS).